Reading from the N-terminus, the 279-residue chain is Thymidylate synthase (279 aa).

133–134 (RR) is a binding site for dUMP. Catalysis depends on Cys-154, which acts as the Nucleophile. DUMP is bound by residues 178–181 (RSND), Asn-189, and 219–221 (HIY). Position 181 (Asp-181) interacts with (6R)-5,10-methylene-5,6,7,8-tetrahydrofolate. Residue Ala-278 participates in (6R)-5,10-methylene-5,6,7,8-tetrahydrofolate binding.

It belongs to the thymidylate synthase family. Bacterial-type ThyA subfamily. As to quaternary structure, homodimer.

It is found in the cytoplasm. The catalysed reaction is dUMP + (6R)-5,10-methylene-5,6,7,8-tetrahydrofolate = 7,8-dihydrofolate + dTMP. It participates in pyrimidine metabolism; dTTP biosynthesis. In terms of biological role, catalyzes the reductive methylation of 2'-deoxyuridine-5'-monophosphate (dUMP) to 2'-deoxythymidine-5'-monophosphate (dTMP) while utilizing 5,10-methylenetetrahydrofolate (mTHF) as the methyl donor and reductant in the reaction, yielding dihydrofolate (DHF) as a by-product. This enzymatic reaction provides an intracellular de novo source of dTMP, an essential precursor for DNA biosynthesis. The polypeptide is Thymidylate synthase (Streptococcus agalactiae serotype Ia (strain ATCC 27591 / A909 / CDC SS700)).